The primary structure comprises 220 residues: RNA-free ribonuclease P (220 aa).

It belongs to the HARP family.

It carries out the reaction Endonucleolytic cleavage of RNA, removing 5'-extranucleotides from tRNA precursor.. Functionally, RNA-free RNase P that catalyzes the removal of the 5'-leader sequence from pre-tRNA to produce the mature 5'-terminus. The sequence is that of RNA-free ribonuclease P from Methanothermobacter thermautotrophicus (strain ATCC 29096 / DSM 1053 / JCM 10044 / NBRC 100330 / Delta H) (Methanobacterium thermoautotrophicum).